The primary structure comprises 166 residues: Large ribosomal subunit protein bL9 (166 aa).

This sequence belongs to the bacterial ribosomal protein bL9 family.

Functionally, binds to the 23S rRNA. The chain is Large ribosomal subunit protein bL9 from Psychrobacter arcticus (strain DSM 17307 / VKM B-2377 / 273-4).